Reading from the N-terminus, the 347-residue chain is KIN17-like protein KLP (347 aa).

The Nuclear localization signal (NLS) motif lies at 222–225 (KRKR).

It belongs to the KIN17 family.

Its subcellular location is the cytoplasm. It is found in the nucleus. Its function is as follows. May act as repressor of root growth during copper excess and of hypocotyl growth in the dark. The sequence is that of KIN17-like protein KLP from Arabidopsis thaliana (Mouse-ear cress).